The sequence spans 37 residues: Large ribosomal subunit protein bL36 (37 aa).

This sequence belongs to the bacterial ribosomal protein bL36 family.

The protein is Large ribosomal subunit protein bL36 of Bordetella bronchiseptica (strain ATCC BAA-588 / NCTC 13252 / RB50) (Alcaligenes bronchisepticus).